We begin with the raw amino-acid sequence, 161 residues long: Cyclic pyranopterin monophosphate synthase (161 aa).

Substrate-binding positions include 73–75 and 110–111; these read LCH and ME. The active site involves aspartate 125.

The protein belongs to the MoaC family. In terms of assembly, homohexamer; trimer of dimers.

It carries out the reaction (8S)-3',8-cyclo-7,8-dihydroguanosine 5'-triphosphate = cyclic pyranopterin phosphate + diphosphate. Its pathway is cofactor biosynthesis; molybdopterin biosynthesis. Its function is as follows. Catalyzes the conversion of (8S)-3',8-cyclo-7,8-dihydroguanosine 5'-triphosphate to cyclic pyranopterin monophosphate (cPMP). The protein is Cyclic pyranopterin monophosphate synthase of Pseudomonas savastanoi pv. phaseolicola (strain 1448A / Race 6) (Pseudomonas syringae pv. phaseolicola (strain 1448A / Race 6)).